The sequence spans 431 residues: Enolase (431 aa).

(2R)-2-phosphoglycerate is bound at residue Gln167. Glu209 serves as the catalytic Proton donor. The Mg(2+) site is built by Asp246, Glu290, and Asp316. (2R)-2-phosphoglycerate contacts are provided by Lys341, Arg370, Ser371, and Lys392. Lys341 acts as the Proton acceptor in catalysis.

Belongs to the enolase family. As to quaternary structure, component of the RNA degradosome, a multiprotein complex involved in RNA processing and mRNA degradation. Mg(2+) serves as cofactor.

Its subcellular location is the cytoplasm. The protein resides in the secreted. It localises to the cell surface. It catalyses the reaction (2R)-2-phosphoglycerate = phosphoenolpyruvate + H2O. It functions in the pathway carbohydrate degradation; glycolysis; pyruvate from D-glyceraldehyde 3-phosphate: step 4/5. Its function is as follows. Catalyzes the reversible conversion of 2-phosphoglycerate (2-PG) into phosphoenolpyruvate (PEP). It is essential for the degradation of carbohydrates via glycolysis. The polypeptide is Enolase (Shigella flexneri serotype 5b (strain 8401)).